The following is a 367-amino-acid chain: MKIDGTPYRSIWVDDADRWSVRIIDQTKLPWAIEIPRLTTPEQIAHAISAMLVRGAPLIGATAAYGVALAMRADPSDEALETVVPMLAATRPTAINLRWALMRMQRALSAHPPAERADAAYAEAAAICDEDVATNRAIGEHGLGLIRARAQGRRRVNILTHCNAGWIATVDWGTALAPIYMAHDAGIDVHVLVDETRPRNQGFSLTAWELGKHGVPHTVIVDNAGGHFMQRGEVDMVIVGTDRVTRAGDVANKIGTYLKALAARDNGVPFYVALPSSTIDWTIADGLGSIPIEERAPAEVTTITGRALDGSMLTVRIVPKDSTAANPAFDVTPARLVSGLITERGICAANERALAAMFPDQALQTAA.

Substrate contacts are provided by residues R54–A56, R91, and Q201. The Proton donor role is filled by D242. Residue N252–K253 coordinates substrate.

It belongs to the eIF-2B alpha/beta/delta subunits family. MtnA subfamily.

The enzyme catalyses 5-(methylsulfanyl)-alpha-D-ribose 1-phosphate = 5-(methylsulfanyl)-D-ribulose 1-phosphate. It functions in the pathway amino-acid biosynthesis; L-methionine biosynthesis via salvage pathway; L-methionine from S-methyl-5-thio-alpha-D-ribose 1-phosphate: step 1/6. Functionally, catalyzes the interconversion of methylthioribose-1-phosphate (MTR-1-P) into methylthioribulose-1-phosphate (MTRu-1-P). The sequence is that of Methylthioribose-1-phosphate isomerase from Acidiphilium cryptum (strain JF-5).